Here is a 146-residue protein sequence, read N- to C-terminus: MNSLSIFFIVVATAAVCLLFIQGYSIYENYGNIKEFNATHAAFEYSKSIGGTPALDRRVQDVNDTISDVKQKWRCVVYPGNGFVSASIFGFQTEVGLNNTRSIRKFNTMQQCIDFTFSDVINIDIYNPCVAPNINNAECQFLKSVL.

Residues 1–21 (MNSLSIFFIVVATAAVCLLFI) form a helical; Signal-anchor for type II membrane protein membrane-spanning segment. Residues 22 to 146 (QGYSIYENYG…AECQFLKSVL (125 aa)) are Virion surface-facing.

Belongs to the orthopoxvirus OPG155 protein family. As to quaternary structure, part of a stable entry-fusion complex (EFC) which is at least composed of proteins OPG143, OPG147, OPG155, OPG086, OPG094, OPG107, OPG104, and OPG099. Formation of the viral membrane is necessary for the assembly of the complex. Interacts directly with protein OPG107. Contains two intramolecular disulfide bonds. They are created by the viral disulfide bond formation pathway, a poxvirus-specific pathway that operates on the cytoplasmic side of the MV membranes.

The protein resides in the virion membrane. Its function is as follows. Envelope protein required for virus entry into host cell and for cell-cell fusion (syncytium formation). This Ectromelia virus (strain Moscow) (ECTV) protein is Envelope protein OPG155 (OPG155).